Reading from the N-terminus, the 1355-residue chain is MSTTTTIPGAAPKKKRNRIPLSCTICRKRKVKCDKTRPHCNQCTKTGVAHLCHYMEQNWAQDAKKEISKDNELKNLKERCKILEEKLARYMHNPAVTASLGASVVNSPVGLSSPVDAPIKLTNSPMVKLEDDTNMVDDMARPVKEHDYDELDLTRQFDLLHIKSNGTIHLGATHWLAIMKGDPYLKLLWTHIFTMREKLLEYYTNGSGHKRRKRQKNGGKCPIDHSKFKAAESEQKNHFVKTTPMVNDTPKSSIGKCPIDHRAMSNPVGVNSNAGQFQPMHPPHTHIVQNKCPVDHKVNDSNLTSANTDNKNAATKKCPINHSKYTKEKMQGAGLNDKPLTKQEVIEKLCQLLPPKRIIMLYIDKFFKHFYPVIPILDELNFKNNINQIFDLNSLISNTIMSTSSDLELEPITSMTLNKPTDYSNLGILIIIMRLVWLSLPMNSCKIDIENPLLNKLRTDHDFKNEDYESGSLASSLRLKDELQLLKYEVDGFALDLVKKHLIKFDEISSISNTNVNMSTIQFAVFFKFYLMNCANASSQGNSAGNFDNESHQILLSSIMMMAFSCGLHRDPDNFPQLNVVSANLTTDNTRSGPPSNSNRNGSETPSVSPKDTNVSIERAKHTWRKVWYYIVSLDVQQSLLLGSPRLIRNLNDISDTKLPSASKIDYVKDIKELIIIKNYTLFYQLDLCIVAVLNHTLNISIAKNVRKFELDALISNLQKLTDGEKGINDVINSLINHGLLSTSEVPIGLQKFDDIYDLPRMEDILLARKSEQEIVGDENERIGQDVDKKLDLPHEMTSKALFFSKHMTLRMLLYLLNYILFTHYEPLGAEDPTTTILAKNYAQKALDYALDGYRNCMLYFVGVSDQNPLFKYMNVILCFHSLDIGHRALQFIICLILRVKCGPLNGLKETQTIFGTSVPSSCNSSSVEDENTEEPNNLNQDNQFQDDLMQNINLDNSDSLAEKLMSRMVLFKQLTEKLAPKYSFSVRVMKSTGFFISLLTTPSGSFGSKKNGSKHKHGVGKLLLSNWKHPKISNIPALLSSDSDQLKKCPVYQDALGFMPSRPSVTNLPSISNVEGLLPNAQANGRMTPQLPPIRSYQPITYSSSHMRVTPNSESDARKLGPDSHQVTNPLIPSPLSPANQQQNQVNVLHMHQQRSMSPAPMPMMNPTAMTTNQNMIPERKYAPHSGAATPILPGTNSDIQQQTQMTRNDPYPTEQFSLPPISSAKNNMAWGTTPESEQGDHLTPNTTTSSLDTPDFEDFIIQNSNFNGLLINPNSLAEAMGSLPSGRDGAILNVNSFKDFTTSTNDKTITPNSADQTDLFSVDMASTDFLPIDNFAIDGFMDSANLDIGSIWE.

Residues 23 to 52 constitute a DNA-binding region (zn(2)-C6 fungal-type); the sequence is CTICRKRKVKCDKTRPHCNQCTKTGVAHLC. 3 disordered regions span residues 586-614, 918-942, and 1221-1253; these read TTDN…KDTN, SVPS…LNQD, and PPIS…TSSL. Residues 589–603 are compositionally biased toward low complexity; the sequence is NTRSGPPSNSNRNGS. The span at 604–614 shows a compositional bias: polar residues; that stretch reads ETPSVSPKDTN. The span at 918-927 shows a compositional bias: low complexity; sequence SVPSSCNSSS. Polar residues predominate over residues 1225-1238; it reads SAKNNMAWGTTPES.

The protein resides in the nucleus. Functionally, transcription factor that contributes to plasma membrane sphingolipid incorporation and membrane permeability, decreasing fluconazole accumulation. Regulates 337 genes under fluconazole stress, including several related to lipid biosynthesis pathways such as RSB1, encoding a sphingoid long-chain base efflux transporter. Associates with the promoter of RSB1 in the region containing two 5'-CCCCTCC-3' motifs and increases its promoter occupancy upon fluconazole stress. This chain is Transcription factor MAR1, found in Candida glabrata (strain ATCC 2001 / BCRC 20586 / JCM 3761 / NBRC 0622 / NRRL Y-65 / CBS 138) (Yeast).